The primary structure comprises 205 residues: Pyrrolidone-carboxylate peptidase (205 aa).

Catalysis depends on residues glutamate 79, cysteine 142, and histidine 165.

It belongs to the peptidase C15 family. Homotetramer.

It localises to the cytoplasm. The enzyme catalyses Release of an N-terminal pyroglutamyl group from a polypeptide, the second amino acid generally not being Pro.. Removes 5-oxoproline from various penultimate amino acid residues except L-proline. In Gloeobacter violaceus (strain ATCC 29082 / PCC 7421), this protein is Pyrrolidone-carboxylate peptidase.